Consider the following 398-residue polypeptide: tRNA(Ile)-lysidine synthase (398 aa).

Residue 17–22 (SGGPDS) participates in ATP binding.

It belongs to the tRNA(Ile)-lysidine synthase family.

It is found in the cytoplasm. It catalyses the reaction cytidine(34) in tRNA(Ile2) + L-lysine + ATP = lysidine(34) in tRNA(Ile2) + AMP + diphosphate + H(+). Ligates lysine onto the cytidine present at position 34 of the AUA codon-specific tRNA(Ile) that contains the anticodon CAU, in an ATP-dependent manner. Cytidine is converted to lysidine, thus changing the amino acid specificity of the tRNA from methionine to isoleucine. This is tRNA(Ile)-lysidine synthase from Mesoplasma florum (strain ATCC 33453 / NBRC 100688 / NCTC 11704 / L1) (Acholeplasma florum).